Consider the following 267-residue polypeptide: Stomatin-3 (267 aa).

The helical transmembrane segment at 17–37 threads the bilayer; that stretch reads FVALICAWAFLLLTFPVSIFF.

This sequence belongs to the band 7/mec-2 family.

Its subcellular location is the membrane. This is Stomatin-3 (sto-3) from Caenorhabditis elegans.